The sequence spans 608 residues: Protein FAM151A (608 aa).

Residues tryptophan 14–leucine 34 form a helical membrane-spanning segment. The segment covering valine 586 to glycine 596 has biased composition (polar residues). The segment at valine 586–arginine 608 is disordered.

This sequence belongs to the menorin family.

It localises to the membrane. The protein is Protein FAM151A (Fam151a) of Mus musculus (Mouse).